A 247-amino-acid polypeptide reads, in one-letter code: Isoprenyl transferase (247 aa).

D18 is an active-site residue. A Mg(2+)-binding site is contributed by D18. Residues 19–22, W23, R31, H35, and 63–65 contribute to the substrate site; these read GNGR and SSE. Catalysis depends on N66, which acts as the Proton acceptor. Substrate is bound by residues W67, R69, R186, and 192–194; that span reads RLS. Mg(2+) is bound at residue E205.

Belongs to the UPP synthase family. In terms of assembly, homodimer. The cofactor is Mg(2+).

Functionally, catalyzes the condensation of isopentenyl diphosphate (IPP) with allylic pyrophosphates generating different type of terpenoids. In Rhizobium meliloti (strain 1021) (Ensifer meliloti), this protein is Isoprenyl transferase.